We begin with the raw amino-acid sequence, 173 residues long: NADH-ubiquinone oxidoreductase chain 6 (173 aa).

Helical transmembrane passes span 1–21, 27–47, 53–73, 86–106, and 139–159; these read MTYIVSLFLLGLVLGLVAVAS, FAALGLVVAAGVGCGVLVGYG, LVLFLIYLGGMLVVFAYSAAL, SVLGYVVVYTVGVMLVAGWFW, and YGGGMLIVCAWVLLLTLFVVL.

Belongs to the complex I subunit 6 family.

The protein localises to the mitochondrion membrane. The catalysed reaction is a ubiquinone + NADH + 5 H(+)(in) = a ubiquinol + NAD(+) + 4 H(+)(out). Core subunit of the mitochondrial membrane respiratory chain NADH dehydrogenase (Complex I) that is believed to belong to the minimal assembly required for catalysis. Complex I functions in the transfer of electrons from NADH to the respiratory chain. The immediate electron acceptor for the enzyme is believed to be ubiquinone. This Salmo salar (Atlantic salmon) protein is NADH-ubiquinone oxidoreductase chain 6 (MT-ND6).